The primary structure comprises 487 residues: Cyclic AMP-dependent transcription factor ATF-2 (487 aa).

The C2H2-type zinc-finger motif lies at 7–31 (FLCTAPGCGQRFTNEDHLAVHKHKH). Disordered stretches follow at residues 106-132 (EEPS…DEKE) and 267-354 (QHPQ…CRQK). Low complexity predominate over residues 298 to 319 (QQPATSTTETPASPAQPTQQTP). A compositionally biased stretch (basic and acidic residues) spans 328–345 (AANEDPDEKRRKFLERNR). In terms of domain architecture, bZIP spans 334 to 397 (DEKRRKFLER…AQLKQLLLAH (64 aa)). A basic motif region spans residues 336–356 (KRRKFLERNRAAASRCRQKRK). Residues 362–390 (LEKKAEDLSSLNGQLQNEVTLLRNEVAQL) form a leucine-zipper region. Positions 387–396 (VAQLKQLLLA) match the Nuclear export signal motif. The disordered stretch occupies residues 407–487 (KKSGYHTADK…PPSQAQPSGS (81 aa)). Over residues 425–436 (VPSSPHTEAIQH) the composition is skewed to polar residues. Residues 437–449 (SSVSTSNGVSSTS) show a composition bias toward low complexity. Polar residues predominate over residues 457–468 (SVLTQLADQSSE).

Belongs to the bZIP family. ATF subfamily. In terms of assembly, binds DNA as a dimer and can form a homodimer in the absence of DNA. Can form a heterodimer with JUN. Heterodimerization is essential for its transcriptional activity.

Its subcellular location is the nucleus. The protein resides in the cytoplasm. It is found in the mitochondrion outer membrane. Transcriptional activator which regulates the transcription of various genes, including those involved in anti-apoptosis, cell growth, and DNA damage response. Dependent on its binding partner, binds to CRE (cAMP response element) consensus sequences (5'-TGACGTCA-3') or to AP-1 (activator protein 1) consensus sequences (5'-TGACTCA-3'). This is Cyclic AMP-dependent transcription factor ATF-2 (ATF2) from Gallus gallus (Chicken).